We begin with the raw amino-acid sequence, 60 residues long: Large ribosomal subunit protein bL32 (60 aa).

Basic residues predominate over residues 1-23; that stretch reads MAKHPVPKKKTSKARRDARRSHH. A disordered region spans residues 1-30; the sequence is MAKHPVPKKKTSKARRDARRSHHALTPPTL.

Part of the 50S ribosomal subunit.

In terms of biological role, found on the solvent side of the large subunit. In Thermus thermophilus (strain ATCC 27634 / DSM 579 / HB8), this protein is Large ribosomal subunit protein bL32 (rpmF).